Consider the following 151-residue polypeptide: 6,7-dimethyl-8-ribityllumazine synthase (151 aa).

5-amino-6-(D-ribitylamino)uracil is bound by residues Phe15, Ala49–Glu51, and Ala73–Ile75. Glu78 to Thr79 contacts (2S)-2-hydroxy-3-oxobutyl phosphate. His81 functions as the Proton donor in the catalytic mechanism. Phe106 serves as a coordination point for 5-amino-6-(D-ribitylamino)uracil. (2S)-2-hydroxy-3-oxobutyl phosphate is bound at residue Arg120.

The protein belongs to the DMRL synthase family. As to quaternary structure, forms an icosahedral capsid composed of 60 subunits, arranged as a dodecamer of pentamers.

The catalysed reaction is (2S)-2-hydroxy-3-oxobutyl phosphate + 5-amino-6-(D-ribitylamino)uracil = 6,7-dimethyl-8-(1-D-ribityl)lumazine + phosphate + 2 H2O + H(+). The protein operates within cofactor biosynthesis; riboflavin biosynthesis; riboflavin from 2-hydroxy-3-oxobutyl phosphate and 5-amino-6-(D-ribitylamino)uracil: step 1/2. Functionally, catalyzes the formation of 6,7-dimethyl-8-ribityllumazine by condensation of 5-amino-6-(D-ribitylamino)uracil with 3,4-dihydroxy-2-butanone 4-phosphate. This is the penultimate step in the biosynthesis of riboflavin. The chain is 6,7-dimethyl-8-ribityllumazine synthase from Coxiella burnetii (strain CbuG_Q212) (Coxiella burnetii (strain Q212)).